The chain runs to 215 residues: Protein C' (215 aa).

Residues 12–34 (MPSFLKKILKLRGRRQEDESRSR) are disordered. The interval 15–22 (FLKKILKL) is involved in self-degradation and in host STAT1 degradation.

The protein belongs to the respirovirus protein C family. In terms of assembly, the different isoforms interact (via C-terminus) with unphosphorylated and phosphorylated human STAT1 (via N-terminus), favoring the formation of parallel STAT1 homodimers. The different isoforms do not interact with host STAT2. C protein interacts with L protein; this interaction has an inhibitory effect on viral transcription and replication. In terms of processing, Y1 and Y2 proteins are produced not only by alternative initiation, but also by proteolytic cleavage of C'. Only alternative initiation is detected in vitro, whereas in vivo cleavage seems to be predominant.

Its subcellular location is the host cytoplasm. Its function is as follows. The different products prevent the establishment of cellular antiviral state by blocking the interferon-alpha/beta (IFN-alpha/beta) and IFN-gamma signaling pathways. They inhibit IFN-alpha/beta induced tyrosine phosphorylation of STAT1 and STAT2. Blocking the IFN-alpha/beta pathway requires binding to STAT1 in the cytoplasm. They inhibit IFN-gamma induced serine phosphorylation of STAT1. Block the IFN-gamma pathway by binding to and stabilizing the parallel form of the STAT1 dimer, further inducing high-molecular-weight complex formation and inhibition of transcription by IFN-gamma. May also have a role in preventing the cell to enter apoptosis. Modulate regulation of viral transcription and replication. Overexpression inhibits the viral RNA polymerase. The absence of all C', C, Y1 and Y2 proteins leads to viral delayed growth. Plays an important role in virion particles release. Modulates virion shape. The sequence is that of Protein C' (P/V/C) from Sendai virus (strain Nagoya) (SeV).